The following is a 428-amino-acid chain: Enolase (428 aa).

A (2R)-2-phosphoglycerate-binding site is contributed by glutamine 163. The active-site Proton donor is the glutamate 205. Mg(2+)-binding residues include aspartate 242, glutamate 286, and aspartate 313. Lysine 338, arginine 367, serine 368, and lysine 389 together coordinate (2R)-2-phosphoglycerate. The Proton acceptor role is filled by lysine 338.

It belongs to the enolase family. The cofactor is Mg(2+).

It localises to the cytoplasm. The protein localises to the secreted. Its subcellular location is the cell surface. The catalysed reaction is (2R)-2-phosphoglycerate = phosphoenolpyruvate + H2O. It participates in carbohydrate degradation; glycolysis; pyruvate from D-glyceraldehyde 3-phosphate: step 4/5. Its function is as follows. Catalyzes the reversible conversion of 2-phosphoglycerate (2-PG) into phosphoenolpyruvate (PEP). It is essential for the degradation of carbohydrates via glycolysis. The chain is Enolase from Bordetella petrii (strain ATCC BAA-461 / DSM 12804 / CCUG 43448).